The primary structure comprises 216 residues: UPF0502 protein VC0395_0676/VC395_A0574 (216 aa).

It belongs to the UPF0502 family.

This chain is UPF0502 protein VC0395_0676/VC395_A0574, found in Vibrio cholerae serotype O1 (strain ATCC 39541 / Classical Ogawa 395 / O395).